The sequence spans 460 residues: ATP synthase subunit beta (460 aa).

Residue Gly-150–Thr-157 coordinates ATP.

It belongs to the ATPase alpha/beta chains family. As to quaternary structure, F-type ATPases have 2 components, CF(1) - the catalytic core - and CF(0) - the membrane proton channel. CF(1) has five subunits: alpha(3), beta(3), gamma(1), delta(1), epsilon(1). CF(0) has three main subunits: a(1), b(2) and c(9-12). The alpha and beta chains form an alternating ring which encloses part of the gamma chain. CF(1) is attached to CF(0) by a central stalk formed by the gamma and epsilon chains, while a peripheral stalk is formed by the delta and b chains.

It is found in the cell inner membrane. It carries out the reaction ATP + H2O + 4 H(+)(in) = ADP + phosphate + 5 H(+)(out). Its function is as follows. Produces ATP from ADP in the presence of a proton gradient across the membrane. The catalytic sites are hosted primarily by the beta subunits. The sequence is that of ATP synthase subunit beta from Escherichia coli (strain SMS-3-5 / SECEC).